A 149-amino-acid polypeptide reads, in one-letter code: Large ribosomal subunit protein uL15 (149 aa).

The tract at residues 1-64 (MVELHDLQPH…GQTPLYMRIP (64 aa)) is disordered. Residues 31–40 (TAGRGHKGQK) show a composition bias toward basic residues.

It belongs to the universal ribosomal protein uL15 family. As to quaternary structure, part of the 50S ribosomal subunit.

Functionally, binds to the 23S rRNA. The polypeptide is Large ribosomal subunit protein uL15 (Aquifex aeolicus (strain VF5)).